Reading from the N-terminus, the 497-residue chain is C4-dicarboxylate transport protein (497 aa).

Helical transmembrane passes span 27–45 (LYVQVLAAIAVGILLGYFY), 60–82 (IMLVKMIIAPVIFLTVATGIAGM), 95–117 (AMIYFLTFSTLALLVGLVVANVV), 168–185 (ILQVLFISVLFGISLAIV), 205–227 (RLVAILMKAAPIGAFGAMAFTIG), 237–259 (LAMLIGTFYLTSFLFVFMVLGAV), 348–370 (ILLLLIAMLSSKGAAGITGAGFI), and 374–393 (ATLSAVPSVPVAGMALILGI). Residues 466 to 497 (ADRTLAGRPGGRDSRRIAPDHSAQVFGGPLSL) are disordered. Residues 475–484 (GGRDSRRIAP) show a composition bias toward basic and acidic residues.

It belongs to the dicarboxylate/amino acid:cation symporter (DAACS) (TC 2.A.23) family.

The protein localises to the cell inner membrane. Functionally, responsible for the transport of dicarboxylates such as succinate, fumarate, and malate from the periplasm across the inner membrane. This transport system plays an essential role in the energy supply of tropical rhizobium-legume symbionts. The polypeptide is C4-dicarboxylate transport protein (dctA1) (Sinorhizobium fredii (strain NBRC 101917 / NGR234)).